Reading from the N-terminus, the 186-residue chain is Elongation factor P (186 aa).

The protein belongs to the elongation factor P family.

The protein resides in the cytoplasm. Its pathway is protein biosynthesis; polypeptide chain elongation. Involved in peptide bond synthesis. Stimulates efficient translation and peptide-bond synthesis on native or reconstituted 70S ribosomes in vitro. Probably functions indirectly by altering the affinity of the ribosome for aminoacyl-tRNA, thus increasing their reactivity as acceptors for peptidyl transferase. The polypeptide is Elongation factor P (Shewanella woodyi (strain ATCC 51908 / MS32)).